A 260-amino-acid chain; its full sequence is uncharacterized protein (260 aa).

6 consecutive transmembrane segments (helical) span residues 39-59, 68-88, 111-131, 159-179, 193-213, and 214-234; these read IFYL…LIEA, IIVG…SFLI, FLGS…FFLG, LIFS…LFKI, FIYL…ILSQ, and FILV…IKLI.

It belongs to the TatC family.

It localises to the mitochondrion membrane. This is an uncharacterized protein from Reclinomonas americana.